The primary structure comprises 72 residues: UPF0337 protein bsl2407 (72 aa).

Positions 1–55 (MGSTTDKIKGNANEAIGKAKQGIGEATGSDRLKGEGVVQEVKGKGQQAMGDAKDA) are disordered. Residues 35-47 (EGVVQEVKGKGQQ) are compositionally biased toward low complexity.

Belongs to the UPF0337 (CsbD) family.

In Bradyrhizobium diazoefficiens (strain JCM 10833 / BCRC 13528 / IAM 13628 / NBRC 14792 / USDA 110), this protein is UPF0337 protein bsl2407.